We begin with the raw amino-acid sequence, 198 residues long: Recombination protein RecR (198 aa).

The C4-type zinc finger occupies 56 to 71; the sequence is CDICGNVSEEPTCRIC. One can recognise a Toprim domain in the interval 79–175; the sequence is AVVCVVEEPK…NVTRLASGLP (97 aa).

This sequence belongs to the RecR family.

May play a role in DNA repair. It seems to be involved in an RecBC-independent recombinational process of DNA repair. It may act with RecF and RecO. This chain is Recombination protein RecR, found in Saccharopolyspora erythraea (strain ATCC 11635 / DSM 40517 / JCM 4748 / NBRC 13426 / NCIMB 8594 / NRRL 2338).